Here is a 301-residue protein sequence, read N- to C-terminus: 4-hydroxy-tetrahydrodipicolinate synthase (301 aa).

Threonine 57 is a binding site for pyruvate. Residue tyrosine 143 is the Proton donor/acceptor of the active site. Lysine 171 serves as the catalytic Schiff-base intermediate with substrate. Isoleucine 211 provides a ligand contact to pyruvate.

The protein belongs to the DapA family. Homotetramer; dimer of dimers.

It localises to the cytoplasm. It carries out the reaction L-aspartate 4-semialdehyde + pyruvate = (2S,4S)-4-hydroxy-2,3,4,5-tetrahydrodipicolinate + H2O + H(+). It participates in amino-acid biosynthesis; L-lysine biosynthesis via DAP pathway; (S)-tetrahydrodipicolinate from L-aspartate: step 3/4. Functionally, catalyzes the condensation of (S)-aspartate-beta-semialdehyde [(S)-ASA] and pyruvate to 4-hydroxy-tetrahydrodipicolinate (HTPA). The protein is 4-hydroxy-tetrahydrodipicolinate synthase of Bifidobacterium longum (strain DJO10A).